Consider the following 364-residue polypeptide: tRNA 2-selenouridine synthase (364 aa).

Residues 14 to 137 enclose the Rhodanese domain; that stretch reads LLADTPLIDV…LRQTAIQATW (124 aa). Catalysis depends on Cys-97, which acts as the S-selanylcysteine intermediate.

It belongs to the SelU family. In terms of assembly, monomer.

The catalysed reaction is 5-methylaminomethyl-2-thiouridine(34) in tRNA + selenophosphate + (2E)-geranyl diphosphate + H2O + H(+) = 5-methylaminomethyl-2-selenouridine(34) in tRNA + (2E)-thiogeraniol + phosphate + diphosphate. It carries out the reaction 5-methylaminomethyl-2-thiouridine(34) in tRNA + (2E)-geranyl diphosphate = 5-methylaminomethyl-S-(2E)-geranyl-thiouridine(34) in tRNA + diphosphate. The enzyme catalyses 5-methylaminomethyl-S-(2E)-geranyl-thiouridine(34) in tRNA + selenophosphate + H(+) = 5-methylaminomethyl-2-(Se-phospho)selenouridine(34) in tRNA + (2E)-thiogeraniol. It catalyses the reaction 5-methylaminomethyl-2-(Se-phospho)selenouridine(34) in tRNA + H2O = 5-methylaminomethyl-2-selenouridine(34) in tRNA + phosphate. Involved in the post-transcriptional modification of the uridine at the wobble position (U34) of tRNA(Lys), tRNA(Glu) and tRNA(Gln). Catalyzes the conversion of 2-thiouridine (S2U-RNA) to 2-selenouridine (Se2U-RNA). Acts in a two-step process involving geranylation of 2-thiouridine (S2U) to S-geranyl-2-thiouridine (geS2U) and subsequent selenation of the latter derivative to 2-selenouridine (Se2U) in the tRNA chain. The chain is tRNA 2-selenouridine synthase from Salmonella paratyphi B (strain ATCC BAA-1250 / SPB7).